Here is a 242-residue protein sequence, read N- to C-terminus: uncharacterized protein (242 aa).

Belongs to the MtxX family.

This is an uncharacterized protein from Methanothermobacter thermautotrophicus (strain ATCC 29096 / DSM 1053 / JCM 10044 / NBRC 100330 / Delta H) (Methanobacterium thermoautotrophicum).